The sequence spans 612 residues: Elongation factor 4 (612 aa).

Residues 11-193 enclose the tr-type G domain; that stretch reads KHIRNFSIVA…EIVKKVPAPD (183 aa). GTP-binding positions include 23 to 28 and 140 to 143; these read DHGKST and NKID.

This sequence belongs to the TRAFAC class translation factor GTPase superfamily. Classic translation factor GTPase family. LepA subfamily.

Its subcellular location is the cell membrane. The enzyme catalyses GTP + H2O = GDP + phosphate + H(+). In terms of biological role, required for accurate and efficient protein synthesis under certain stress conditions. May act as a fidelity factor of the translation reaction, by catalyzing a one-codon backward translocation of tRNAs on improperly translocated ribosomes. Back-translocation proceeds from a post-translocation (POST) complex to a pre-translocation (PRE) complex, thus giving elongation factor G a second chance to translocate the tRNAs correctly. Binds to ribosomes in a GTP-dependent manner. This is Elongation factor 4 from Lactobacillus johnsonii (strain CNCM I-12250 / La1 / NCC 533).